The following is a 79-amino-acid chain: Cytochrome b-c1 complex subunit 10 (79 aa).

The Mitochondrial matrix segment spans residues M1 to E23. A helical membrane pass occupies residues R24–A47. Topologically, residues M48–L79 are mitochondrial intermembrane.

Belongs to the UQCR11/QCR10 family. As to quaternary structure, component of the ubiquinol-cytochrome c oxidoreductase (cytochrome b-c1 complex, complex III, CIII), a multisubunit enzyme composed of 3 respiratory subunits cytochrome b, cytochrome c1 and Rieske protein, 2 core protein subunits, and additional low-molecular weight protein subunits. The complex exists as an obligatory dimer and forms supercomplexes (SCs) in the inner mitochondrial membrane with cytochrome c oxidase (complex IV, CIV).

The protein localises to the mitochondrion inner membrane. Component of the ubiquinol-cytochrome c oxidoreductase, a multisubunit transmembrane complex that is part of the mitochondrial electron transport chain which drives oxidative phosphorylation. The respiratory chain contains 3 multisubunit complexes succinate dehydrogenase (complex II, CII), ubiquinol-cytochrome c oxidoreductase (cytochrome b-c1 complex, complex III, CIII) and cytochrome c oxidase (complex IV, CIV), that cooperate to transfer electrons derived from NADH and succinate to molecular oxygen, creating an electrochemical gradient over the inner membrane that drives transmembrane transport and the ATP synthase. The cytochrome b-c1 complex catalyzes electron transfer from ubiquinol to cytochrome c, linking this redox reaction to translocation of protons across the mitochondrial inner membrane, with protons being carried across the membrane as hydrogens on the quinol. In the process called Q cycle, 2 protons are consumed from the matrix, 4 protons are released into the intermembrane space and 2 electrons are passed to cytochrome c. QCR10 has a role in CIII assembly and RIP1 stability. In Schizosaccharomyces pombe (strain 972 / ATCC 24843) (Fission yeast), this protein is Cytochrome b-c1 complex subunit 10.